Here is a 196-residue protein sequence, read N- to C-terminus: Rho-related GTP-binding protein RhoB (196 aa).

Position 12 to 19 (12 to 19 (GDGACGKT)) interacts with GTP. Tyr-34 is a glycosylation site (O-linked (GlcNAc) tyrosine; by Photorhabdus PAU_02230). The Effector region motif lies at 34 to 42 (YVPTVFENY). Thr-37 carries (Microbial infection) O-linked (Glc) threonine; by C.difficile toxins TcdA and TcdB glycosylation. Asn-41 is modified (ADP-ribosylasparagine; by botulinum toxin). GTP is bound by residues 59-63 (DTAGQ) and 117-120 (NKKD). Position 154 is a phosphotyrosine (Tyr-154). S-palmitoyl cysteine attachment occurs at residues Cys-189 and Cys-192. Cysteine methyl ester is present on Cys-193. Residue Cys-193 is the site of S-farnesyl cysteine; in plasma membrane form attachment. Cys-193 carries S-geranylgeranyl cysteine; in endosomal form lipidation. Residues 194–196 (KVL) constitute a propeptide, removed in mature form.

It belongs to the small GTPase superfamily. Rho family. As to quaternary structure, binds ROCK1 and ROCK2. Also binds PKN1/PRK1. Interacts with ARGGEF3. Interacts with RTKN. Interacts with AKAP13. Interacts with RIPOR1. Prenylation specifies the subcellular location of RHOB. The farnesylated form is localized to the plasma membrane while the geranylgeranylated form is localized to the endosome. In terms of processing, (Microbial infection) Glycosylated at Tyr-34 by Photorhabdus asymbiotica toxin PAU_02230. Mono-O-GlcNAcylation by PAU_02230 inhibits downstream signaling by an impaired interaction with diverse regulator and effector proteins of Rho and leads to actin disassembly. Post-translationally, (Microbial infection) Glucosylated at Thr-37 by C.difficile toxins TcdA and TcdB in the colonic epithelium. Monoglucosylation completely prevents the recognition of the downstream effector, blocking the GTPases in their inactive form, leading to actin cytoskeleton disruption.

It localises to the late endosome membrane. The protein resides in the cell membrane. The protein localises to the nucleus. Its subcellular location is the cleavage furrow. Its function is as follows. Mediates apoptosis in neoplastically transformed cells after DNA damage. Not essential for development but affects cell adhesion and growth factor signaling in transformed cells. Plays a negative role in tumorigenesis as deletion causes tumor formation. Involved in intracellular protein trafficking of a number of proteins. Targets PKN1 to endosomes and is involved in trafficking of the EGF receptor from late endosomes to lysosomes. Also required for stability and nuclear trafficking of AKT1/AKT which promotes endothelial cell survival during vascular development. Serves as a microtubule-dependent signal that is required for the myosin contractile ring formation during cell cycle cytokinesis. Required for genotoxic stress-induced cell death in breast cancer cells. The chain is Rho-related GTP-binding protein RhoB (RHOB) from Homo sapiens (Human).